Here is a 543-residue protein sequence, read N- to C-terminus: Chaperonin GroEL (543 aa).

Residues 29–32, 86–90, G413, and D504 contribute to the ATP site; these read TVGP and DGTTT.

The protein belongs to the chaperonin (HSP60) family. In terms of assembly, forms a cylinder of 14 subunits composed of two heptameric rings stacked back-to-back. Interacts with the co-chaperonin GroES.

The protein resides in the cytoplasm. The enzyme catalyses ATP + H2O + a folded polypeptide = ADP + phosphate + an unfolded polypeptide.. Its function is as follows. Together with its co-chaperonin GroES, plays an essential role in assisting protein folding. The GroEL-GroES system forms a nano-cage that allows encapsulation of the non-native substrate proteins and provides a physical environment optimized to promote and accelerate protein folding. The protein is Chaperonin GroEL of Mycoplasma pneumoniae (strain ATCC 29342 / M129 / Subtype 1) (Mycoplasmoides pneumoniae).